The primary structure comprises 629 residues: Probable potassium transport system protein Kup 3 (629 aa).

The next 12 helical transmembrane spans lie at 20–40 (LSLS…LYTF), 61–81 (VSLI…SFAL), 106–126 (PFII…GTIT), 143–163 (PSLK…LFAI), 171–191 (IGKA…ILGA), 212–232 (FLFS…LCVT), 253–273 (WFGL…ALVL), 291–311 (FLLP…QAII), 343–363 (IYIG…TIGF), 372–392 (AYGI…FIAL), 400–420 (IITS…FFAA), and 425–445 (FING…MMYI).

Belongs to the HAK/KUP transporter (TC 2.A.72) family.

The protein resides in the cell inner membrane. The enzyme catalyses K(+)(in) + H(+)(in) = K(+)(out) + H(+)(out). Its function is as follows. Transport of potassium into the cell. Likely operates as a K(+):H(+) symporter. The chain is Probable potassium transport system protein Kup 3 from Legionella pneumophila (strain Lens).